We begin with the raw amino-acid sequence, 738 residues long: Glycogen [starch] synthase, muscle (738 aa).

Ser8 carries the phosphoserine; by AMPK and PKA modification. Ser11 bears the Phosphoserine mark. Position 39 (Lys39) interacts with UDP. The UDP-alpha-D-glucose site is built by His205 and Arg211. The alpha-D-glucose 6-phosphate site is built by His291, Glu292, Gln294, His297, and Lys301. UDP is bound at residue Arg331. Arg331 lines the UDP-alpha-D-glucose pocket. Ser412 carries the phosphoserine modification. His501 contacts alpha-D-glucose 6-phosphate. Positions 510, 512, and 513 each coordinate UDP-alpha-D-glucose. Thr515 is a binding site for UDP. Positions 582 and 586 each coordinate alpha-D-glucose 6-phosphate. Positions 632–738 (QGYRYPRPAS…PTSSLGEERN (107 aa)) are disordered. Ser641 is modified (phosphoserine; by DYRK2, GSK3-alpha, GSK3-beta and PASK). Phosphoserine occurs at positions 645, 649, 652, 653, 657, and 672. Positions 658 to 681 (EDEEEPRDGPLGEDSERYDEEEEA) are enriched in acidic residues. Residues 682–695 (AKDRRNIRAPEWPR) show a composition bias toward basic and acidic residues. 3 positions are modified to phosphoserine: Ser698, Ser709, and Ser711. Over residues 698–738 (SCSSSTGGSKRSNSVDTGPSSSLSTPTEPLSPTSSLGEERN) the composition is skewed to low complexity. Thr722 and Thr724 each carry phosphothreonine. 2 positions are modified to phosphoserine: Ser728 and Ser732.

Belongs to the glycosyltransferase 3 family. Part of the GYS1-GYG1 complex, a heterooctamer composed of a tetramer of GYS1 and 2 dimers of GYG1, where each GYS1 protomer binds to one GYG1 subunit (via GYG1 C-terminus); the GYS1 tetramer may dissociate from GYG1 dimers to continue glycogen polymerization on its own. Post-translationally, primed phosphorylation at Ser-657 (site 5) by CSNK2A1 and CSNK2A2 is required for inhibitory phosphorylation at Ser-641 (site 3a), Ser-645 (site 3b), Ser-649 (site 3c) and Ser-653 (site 4) by GSK3A an GSK3B. Phosphorylated at Ser-641 by PASK, leading to inactivation; phosphorylation by PASK is inhibited by glycogen. Phosphorylated at Ser-641 by DYRK2, leading to inactivation. Dephosphorylation at Ser-641 and Ser-645 by PP1 activates the enzyme. Phosphorylation at Ser-8 by AMPK inactivates the enzyme activity.

It carries out the reaction [(1-&gt;4)-alpha-D-glucosyl](n) + UDP-alpha-D-glucose = [(1-&gt;4)-alpha-D-glucosyl](n+1) + UDP + H(+). It participates in glycan biosynthesis; glycogen biosynthesis. Allosteric activation by glucose-6-phosphate. Phosphorylation reduces the activity towards UDP-glucose. When in the non-phosphorylated state, glycogen synthase does not require glucose-6-phosphate as an allosteric activator; when phosphorylated it does. Functionally, glycogen synthase participates in the glycogen biosynthetic process along with glycogenin and glycogen branching enzyme. Extends the primer composed of a few glucose units formed by glycogenin by adding new glucose units to it. In this context, glycogen synthase transfers the glycosyl residue from UDP-Glc to the non-reducing end of alpha-1,4-glucan. This Mus musculus (Mouse) protein is Glycogen [starch] synthase, muscle (Gys1).